The following is a 454-amino-acid chain: Transmembrane protein adipocyte-associated 1 homolog (454 aa).

N-linked (GlcNAc...) asparagine glycosylation is found at Asn26 and Asn44. Helical transmembrane passes span 80 to 100, 113 to 133, 151 to 171, 180 to 200, and 224 to 244; these read AILI…TSVI, AFTL…VYSM, IIIK…GLLF, ILIA…VQVI, and FVFW…IMCL. N-linked (GlcNAc...) asparagine glycosylation occurs at Asn258. Transmembrane regions (helical) follow at residues 262–282 and 290–310; these read FIYC…AALI and LCFV…IIYF. Asn322 and Asn323 each carry an N-linked (GlcNAc...) asparagine glycan. The interval 408–454 is disordered; the sequence is RTGSDDFAHHRDSMLSEPSTGTTTRHLKGLGPQGSLVFEEDPSSLRL. Basic and acidic residues predominate over residues 410-421; the sequence is GSDDFAHHRDSM. The segment covering 445-454 has biased composition (acidic residues); it reads FEEDPSSLRL.

This sequence belongs to the UPF0359 family.

It is found in the membrane. This Caenorhabditis briggsae protein is Transmembrane protein adipocyte-associated 1 homolog (tpra-1).